The primary structure comprises 372 residues: Cell division protein FtsZ 1 (372 aa).

GTP is bound by residues 51–55 (GAGCN), 138–140 (GTG), E169, R173, and D216. The span at 350-360 (PEEETPLETPE) shows a compositional bias: acidic residues. The tract at residues 350 to 372 (PEEETPLETPEESPSIEISIPEL) is disordered. A compositionally biased stretch (low complexity) spans 361 to 372 (ESPSIEISIPEL).

Belongs to the FtsZ family. In terms of assembly, homodimer. Polymerizes to form a dynamic ring structure in a strictly GTP-dependent manner. Interacts directly with several other division proteins.

It is found in the cytoplasm. In terms of biological role, essential cell division protein that forms a contractile ring structure (Z ring) at the future cell division site. The regulation of the ring assembly controls the timing and the location of cell division. One of the functions of the FtsZ ring is to recruit other cell division proteins to the septum to produce a new cell wall between the dividing cells. Binds GTP and shows GTPase activity. This is Cell division protein FtsZ 1 from Pyrococcus furiosus (strain ATCC 43587 / DSM 3638 / JCM 8422 / Vc1).